The sequence spans 288 residues: Syntaxin-1A (288 aa).

The segment covering 1–13 has biased composition (basic and acidic residues); the sequence is MKDRTQELRTAKD. The interval 1–20 is disordered; the sequence is MKDRTQELRTAKDSDDDDDV. Topologically, residues 1-265 are cytoplasmic; the sequence is MKDRTQELRT…KYQSKARRKK (265 aa). Phosphoserine is present on residues S14, S64, and S95. Positions 68–109 form a coiled coil; that stretch reads DEKTKEELEELMSDIKKTANKVRSKLKSIEQSIEQEEGLNRS. At S188 the chain carries Phosphoserine; by DAPK1. The t-SNARE coiled-coil homology domain occupies 192–254; sequence LSEIETRHSE…ERAVSDTKKA (63 aa). Glycyl lysine isopeptide (Lys-Gly) (interchain with G-Cter in SUMO) cross-links involve residues K252, K253, and K256. Residues 266 to 288 form a helical; Anchor for type IV membrane protein membrane-spanning segment; it reads IMIVICCVVLGIVIASTFGGIFG.

The protein belongs to the syntaxin family. Part of the SNARE core complex containing SNAP25, VAMP2 and STX1A; this complex constitutes the basic catalytic machinery of the complex neurotransmitter release apparatus. The SNARE complex interacts with CPLX1. Interacts with STXBP1. The interaction with STXBP1 promotes assembly of the SNARE complex. Interacts (via C-terminus) with KCNB1 (via C-terminus); the interaction increases in a calcium-dependent manner and induces a pore-independent enhancement of exocytosis in neuroendocrine cells, chromaffin cells, pancreatic beta cells and from the soma of dorsal root ganglia (DRG) neurons. Interacts with SYTL4. Interacts with STXBP6. Interacts with PLCL1 (via C2 domain). Interacts with OTOF. Interacts with LGI3. Interacts (via the H3 domain) with SLC6A4 (via the N-terminus); this interaction regulates SLC4A6 channel conductance in thalamocortical neurons. Interacts with SYT6 and SYT8; the interaction is Ca(2+)-dependent. Interacts with VAMP8. Interacts with SNAP23. Interacts with VAPA and SYBU. Interacts with PRRT2. Interacts with SEPT8. Interacts with STXBP5L. Interacts with synaptotagmin-1/SYT1. Interacts with SEPTIN5; in the cerebellar cortex. Interacts with SEPTIN4; in the striatum. Phosphorylated by CK2. Phosphorylation at Ser-188 by DAPK1 significantly decreases its interaction with STXBP1. Post-translationally, sumoylated, sumoylation is required for regulation of synaptic vesicle endocytosis. In terms of processing, (Microbial infection) Targeted and hydrolyzed by C.botulinum neurotoxin type C (BoNT/C) which inhibits neurotransmitter release. Probably hydrolyzes the 253-Lys-|-Ala-254 bond.

The protein resides in the cytoplasmic vesicle. The protein localises to the secretory vesicle. It localises to the synaptic vesicle membrane. It is found in the synapse. Its subcellular location is the synaptosome. The protein resides in the cell membrane. Plays an essential role in hormone and neurotransmitter calcium-dependent exocytosis and endocytosis. Part of the SNARE (Soluble NSF Attachment Receptor) complex composed of SNAP25, STX1A and VAMP2 which mediates the fusion of synaptic vesicles with the presynaptic plasma membrane. STX1A and SNAP25 are localized on the plasma membrane while VAMP2 resides in synaptic vesicles. The pairing of the three SNAREs from the N-terminal SNARE motifs to the C-terminal anchors leads to the formation of the SNARE complex, which brings membranes into close proximity and results in final fusion. Participates in the calcium-dependent regulation of acrosomal exocytosis in sperm. Also plays an important role in the exocytosis of hormones such as insulin or glucagon-like peptide 1 (GLP-1). This chain is Syntaxin-1A (STX1A), found in Bos taurus (Bovine).